Here is a 199-residue protein sequence, read N- to C-terminus: Protein PPP1R35 homolog (199 aa).

The segment covering 1–11 (MPHKRRNRVHA) has biased composition (basic residues). Disordered regions lie at residues 1–23 (MPHKRRNRVHANQRNFTARRVSV) and 36–60 (ESCNGSHADNSSPDSPKAKEGAMTN). A compositionally biased stretch (polar residues) spans 38-49 (CNGSHADNSSPD).

It belongs to the PPP1R35 family. Interacts with Ana3; this complex is recruited to daughter centrioles before their conversion to centrosomes.

The protein localises to the cytoplasm. It is found in the cytoskeleton. The protein resides in the microtubule organizing center. It localises to the centrosome. Its subcellular location is the centriole. Functionally, participates in the later stages of centriole assembly through the interaction with Ana3 leading to the centriole to centrosome conversion in somatic cells. The sequence is that of Protein PPP1R35 homolog from Drosophila melanogaster (Fruit fly).